Reading from the N-terminus, the 86-residue chain is Omega-theraphotoxin-Hhn1e (86 aa).

The signal sequence occupies residues 1–21 (MKSIVFVALFGLALLAVVCSA). The propeptide occupies 22–50 (SEGAHKELLKEVVRAMVVDKTDAVQAEER). Intrachain disulfides connect C52/C66 and C65/C78.

Belongs to the neurotoxin 10 (Hwtx-1) family. 17 (Hntx-9) subfamily. In terms of tissue distribution, expressed by the venom gland.

The protein localises to the secreted. Functionally, ion channel inhibitor. In Cyriopagopus hainanus (Chinese bird spider), this protein is Omega-theraphotoxin-Hhn1e.